A 93-amino-acid chain; its full sequence is MAKEELIQFEGLVTEILPDARYRVQLDAGHEIVAYTAGKMKKNRIKTLAGDRVTIEMSPYDLEKGRLIFRHKDERPSGAPRGGPPRGGQFRRR.

The region spanning 1–72 is the S1-like domain; the sequence is MAKEELIQFE…EKGRLIFRHK (72 aa). The tract at residues 69–93 is disordered; sequence FRHKDERPSGAPRGGPPRGGQFRRR.

Belongs to the IF-1 family. In terms of assembly, component of the 30S ribosomal translation pre-initiation complex which assembles on the 30S ribosome in the order IF-2 and IF-3, IF-1 and N-formylmethionyl-tRNA(fMet); mRNA recruitment can occur at any time during PIC assembly.

It is found in the cytoplasm. Its function is as follows. One of the essential components for the initiation of protein synthesis. Stabilizes the binding of IF-2 and IF-3 on the 30S subunit to which N-formylmethionyl-tRNA(fMet) subsequently binds. Helps modulate mRNA selection, yielding the 30S pre-initiation complex (PIC). Upon addition of the 50S ribosomal subunit IF-1, IF-2 and IF-3 are released leaving the mature 70S translation initiation complex. The polypeptide is Translation initiation factor IF-1 (Nitrobacter hamburgensis (strain DSM 10229 / NCIMB 13809 / X14)).